Reading from the N-terminus, the 85-residue chain is Small ribosomal subunit protein bS16 (85 aa).

This sequence belongs to the bacterial ribosomal protein bS16 family.

This chain is Small ribosomal subunit protein bS16, found in Xanthomonas oryzae pv. oryzae (strain PXO99A).